Reading from the N-terminus, the 712-residue chain is WD repeat-containing protein 91 (712 aa).

Positions 148-180 form a coiled coil; sequence RRTNQVQEENEVLRQKLFALQAEIHRLKKEEQQ. Position 221 is a phosphoserine (serine 221). Positions 230–243 are enriched in low complexity; it reads LLPQSKKSPSRLSP. The interval 230-336 is disordered; sequence LLPQSKKSPS…EAEPCPELHT (107 aa). Phosphoserine occurs at positions 253 and 258. The segment covering 297–308 has biased composition (basic and acidic residues); the sequence is RLQDHGKERKEL. WD repeat units follow at residues 371–410, 413–453, 480–520, 525–564, 567–606, 629–667, and 674–712; these read EHHS…QTKA, ISKS…NLCE, AAPS…QQLQ, PEPI…CAMS, AHYG…LKVS, VQVP…KVLE, and GHRA…AHKA.

This sequence belongs to the WD repeat WDR91 family. Interacts with WDR81; involved in early to late endosome cargo transport. Interacts with BECN1; negatively regulates the PI3 kinase/PI3K activity associated with endosomal membranes.

Its subcellular location is the early endosome membrane. It localises to the late endosome membrane. Functions as a negative regulator of the PI3 kinase/PI3K activity associated with endosomal membranes via BECN1, a core subunit of the PI3K complex. By modifying the phosphatidylinositol 3-phosphate/PtdInsP3 content of endosomal membranes may regulate endosome fusion, recycling, sorting and early to late endosome transport. It is for instance, required for the delivery of cargos like BST2/tetherin from early to late endosome and thereby participates indirectly to their degradation by the lysosome. May play a role in meiosis. The polypeptide is WD repeat-containing protein 91 (Pongo abelii (Sumatran orangutan)).